A 522-amino-acid chain; its full sequence is Cytochrome P450 monooxygenase sirB (522 aa).

A helical transmembrane segment spans residues 22–42 (ASAILFCTLLTVFLFISQGTV). Asparagine 191 carries N-linked (GlcNAc...) asparagine glycosylation. Residues 304 to 324 (VLHLSFAATGTVAILITHMIY) traverse the membrane as a helical segment. Cysteine 462 contacts heme.

This sequence belongs to the cytochrome P450 family. Heme serves as cofactor.

Its subcellular location is the membrane. The protein operates within mycotoxin biosynthesis. In terms of biological role, cytochrome P450 monooxygenase; part of the gene cluster that mediates the biosynthesis of sirodesmin PL, an epipolythiodioxopiperazine (ETP) characterized by a disulfide bridged cyclic dipeptide and that acts as a phytotoxin which is involved in the blackleg didease of canola. SirD catalyzes the O-prenylation of L-tyrosine (L-Tyr) in the presence of dimethylallyl diphosphate (DMAPP) to yield 4-O-dimethylallyl-L-Tyr, and therefore represents probably the first pathway-specific enzyme in the biosynthesis of sirodesmin PL. 4-O-dimethylallyl-L-Tyr, then undergoes condensation with L-Ser in a reaction catalyzed by the non-ribosomal peptide synthase sirP to form the diketopiperazine (DKP) backbone. Further bishydroxylation of the DKP performed by the cytochrome P450 monooxygenase sirC leads to the production of the intermediate phomamide. This step is essential to form the reactive thiol group required for toxicity of sirodesmin PL. The next steps of sirodesmin biosynthesis are not well understood yet, but some predictions could be made from intermediate compounds identification. Phomamide is converted into phomalizarine via oxidation, probably by sirT. Further oxidation, methylation (by sirM or sirN) and reduction steps convert phomalizarine to deacetyl sirodesmin. Finally, acetyltransferase sirH probably acetylates deacetyl sirodesmin to produce sirodesmin PL. The chain is Cytochrome P450 monooxygenase sirB from Leptosphaeria maculans (Blackleg fungus).